The primary structure comprises 419 residues: MNHQRVVVLGAGVTGKSAAEFLHKKGDFVIGIDGSWDALISCNFFHQRYLDKTENFPEDVDLFVRSPGIKTSHPLVIEAKRRDIPIVTDVQLAFQSPEFYQYPSLGITGSTGKTTTVLFLVHLLHSLGISAFAMGNIGFPILQAMYQKGVRVVEISSFQLTEQEQKIPVLSGAAILNISENHLDYHQTLHAYSEAKMNIAKCLQWPDSLWSGEGVSSGRSYLEYTEEIDSVLDKGGALKPLYLHDRNNYCAAYALAKEVTSVPLEAFLQAVQTFEKPPHRIEYLGEKDGVRYINDSKATTMSSVEKALMAVKENVIVIMGGRNKESNFTSLIPVLTQTVKHIVAMGECRKEIAQALSSSLPLTQARDLQEAVSIAQSIAQPGDVILLSPGCASFDQFRSFEERGDCFRQLVGDMEALKI.

Residue 109–115 coordinates ATP; the sequence is GSTGKTT.

Belongs to the MurCDEF family.

It localises to the cytoplasm. It carries out the reaction UDP-N-acetyl-alpha-D-muramoyl-L-alanine + D-glutamate + ATP = UDP-N-acetyl-alpha-D-muramoyl-L-alanyl-D-glutamate + ADP + phosphate + H(+). It functions in the pathway cell wall biogenesis; peptidoglycan biosynthesis. In terms of biological role, cell wall formation. Catalyzes the addition of glutamate to the nucleotide precursor UDP-N-acetylmuramoyl-L-alanine (UMA). This chain is UDP-N-acetylmuramoylalanine--D-glutamate ligase, found in Chlamydia felis (strain Fe/C-56) (Chlamydophila felis).